Here is a 506-residue protein sequence, read N- to C-terminus: Glutamate--tRNA ligase (506 aa).

The short motif at 12 to 22 (PSPTGDPHVGT) is the 'HIGH' region element. A 'KMSKS' region motif is present at residues 253-257 (KLSKR). Lys256 is a binding site for ATP.

It belongs to the class-I aminoacyl-tRNA synthetase family. Glutamate--tRNA ligase type 1 subfamily. In terms of assembly, monomer.

It localises to the cytoplasm. The enzyme catalyses tRNA(Glu) + L-glutamate + ATP = L-glutamyl-tRNA(Glu) + AMP + diphosphate. Catalyzes the attachment of glutamate to tRNA(Glu) in a two-step reaction: glutamate is first activated by ATP to form Glu-AMP and then transferred to the acceptor end of tRNA(Glu). This chain is Glutamate--tRNA ligase, found in Chlamydia trachomatis serovar A (strain ATCC VR-571B / DSM 19440 / HAR-13).